The following is a 237-amino-acid chain: Ribosomal RNA small subunit methyltransferase G (237 aa).

S-adenosyl-L-methionine-binding positions include G78, F83, 129 to 130, and R148; that span reads AE.

The protein belongs to the methyltransferase superfamily. RNA methyltransferase RsmG family.

It is found in the cytoplasm. Specifically methylates the N7 position of a guanine in 16S rRNA. This chain is Ribosomal RNA small subunit methyltransferase G, found in Clostridium kluyveri (strain ATCC 8527 / DSM 555 / NBRC 12016 / NCIMB 10680 / K1).